A 472-amino-acid chain; its full sequence is Argininosuccinate lyase (472 aa).

Belongs to the lyase 1 family. Argininosuccinate lyase subfamily.

It is found in the cytoplasm. It carries out the reaction 2-(N(omega)-L-arginino)succinate = fumarate + L-arginine. The protein operates within amino-acid biosynthesis; L-arginine biosynthesis; L-arginine from L-ornithine and carbamoyl phosphate: step 3/3. The protein is Argininosuccinate lyase of Maricaulis maris (strain MCS10) (Caulobacter maris).